Reading from the N-terminus, the 1162-residue chain is Spike glycoprotein (1162 aa).

A signal peptide spans 1–18 (MLVTPLLLVTLLCALCSA). Residues 19-1095 (VLYDSSSYVY…LKTYIKWPWY (1077 aa)) are Extracellular-facing. N-linked (GlcNAc...) asparagine; by host glycosylation is found at Asn-51, Asn-77, Asn-103, Asn-144, Asn-163, Asn-178, Asn-212, Asn-237, Asn-247, Asn-264, Asn-276, Asn-306, Asn-425, Asn-447, Asn-513, Asn-530, Asn-579, Asn-591, Asn-669, Asn-676, and Asn-714. The heptad repeat 1 (HR1) stretch occupies residues 769-874 (IPFATQLQAR…QVDRLITGRL (106 aa)). Residues 822–866 (QDVVSKQSAILTETMASLNKNFGAISSVIQEIYQQFDAIQANAQV) are a coiled coil. N-linked (GlcNAc...) asparagine; by host glycans are attached at residues Asn-947, Asn-960, Asn-979, Asn-1014, Asn-1038, Asn-1051, and Asn-1074. The tract at residues 1024 to 1105 (NDDFDFNDEL…VWLAIAFATI (82 aa)) is heptad repeat 2 (HR2). Residues 1055-1083 (PILDIDSEIDRIQGVIQGLNDSLIDLEKL) are a coiled coil. The helical transmembrane segment at 1096-1116 (VWLAIAFATIIFILILGWVFF) threads the bilayer. Residues 1117–1162 (MTGCCGCCCGCFGIMPLMSKCGKKSSYYTTFDNDVVTEQYRPKKSV) are Cytoplasmic-facing. The short motif at 1159-1162 (KKSV) is the Di-lysine motif element.

This sequence belongs to the gammacoronaviruses spike protein family. Homotrimer; each monomer consists of a S1 and a S2 subunit. The resulting peplomers protrude from the virus surface as spikes. Post-translationally, specific enzymatic cleavages in vivo yield mature proteins. The precursor is processed into S1 and S2 by host cell furin or furin-like protease to yield the mature S1 and S2 proteins. The cleavage site between S1 and S2 requires the optimal sequence [KR]-X-[KR]-R. Additionally, a second cleavage leads to the release of a fusion peptide after viral attachment to host cell receptor.

The protein resides in the virion membrane. It localises to the host endoplasmic reticulum-Golgi intermediate compartment membrane. Attaches the virion to the host cell membrane by interacting with sialic acids, initiating the infection. In terms of biological role, mediates fusion of the virion and cellular membranes by acting as a class I viral fusion protein. Under the current model, the protein has at least 3 conformational states: pre-fusion native state, pre-hairpin intermediate state, and post-fusion hairpin state. During viral and target cell membrane fusion, the coiled coil regions (heptad repeats) assume a trimer-of-hairpins structure, positioning the fusion peptide in close proximity to the C-terminal region of the ectodomain. The formation of this structure appears to drive apposition and subsequent fusion of viral and target cell membranes. Its function is as follows. Acts as a viral fusion peptide after S2 cleavage occurring upon virus endocytosis. The chain is Spike glycoprotein from Avian infectious bronchitis virus (strain Beaudette) (IBV).